Here is a 411-residue protein sequence, read N- to C-terminus: UPF0761 membrane protein PA0951 (411 aa).

The next 6 helical transmembrane spans lie at 36-56, 92-112, 132-152, 174-194, 207-229, and 244-264; these read LFAV…IPAF, HLTW…LVTI, FLLY…GFAV, LLGL…YSAV, GGVF…VSLF, and IFLL…VLVC.

This sequence belongs to the UPF0761 family.

It localises to the cell inner membrane. This is UPF0761 membrane protein PA0951 from Pseudomonas aeruginosa (strain ATCC 15692 / DSM 22644 / CIP 104116 / JCM 14847 / LMG 12228 / 1C / PRS 101 / PAO1).